A 67-amino-acid polypeptide reads, in one-letter code: uncharacterized protein (67 aa).

Belongs to the baculoviridae 8 kDa protein family.

This is an uncharacterized protein from Autographa californica nuclear polyhedrosis virus (AcMNPV).